The primary structure comprises 286 residues: Bifunctional protein FolD (286 aa).

NADP(+) is bound by residues Gly-164–Ser-166, Ile-189, and Ile-230.

This sequence belongs to the tetrahydrofolate dehydrogenase/cyclohydrolase family. As to quaternary structure, homodimer.

The enzyme catalyses (6R)-5,10-methylene-5,6,7,8-tetrahydrofolate + NADP(+) = (6R)-5,10-methenyltetrahydrofolate + NADPH. The catalysed reaction is (6R)-5,10-methenyltetrahydrofolate + H2O = (6R)-10-formyltetrahydrofolate + H(+). It functions in the pathway one-carbon metabolism; tetrahydrofolate interconversion. Catalyzes the oxidation of 5,10-methylenetetrahydrofolate to 5,10-methenyltetrahydrofolate and then the hydrolysis of 5,10-methenyltetrahydrofolate to 10-formyltetrahydrofolate. This is Bifunctional protein FolD from Wolinella succinogenes (strain ATCC 29543 / DSM 1740 / CCUG 13145 / JCM 31913 / LMG 7466 / NCTC 11488 / FDC 602W) (Vibrio succinogenes).